The primary structure comprises 707 residues: MESKPSRIPRGISVQPSSSLSARMMSGSRGSSLNDTYHSRDSSFRLDSEYQSTSASASASPFQSAWYSESEITQGARSRSQNQQRDHDSKRPKLSCTNCTTSAGRNVGNGLNTLSDSSWRHSQVPRSSSMVLGSFGTDLMRERRDLERRTDSSISNLMDYSHRSGDFTTSSYVQDRVPSYSQGARPKENSMSTLQLNTSSTNHQLPSEHQTILSSRDSRSSLRSNFSSRESESSRSNTQPGFSYSSSRDEAPIISNSERVVSSQRPFQESSDNEGRRTTRRLLSRIASSMSSTFFSRRSSQDSLNTRSLSSENSYVSPRILTASQSRSNVPSTSEVPDNRASEASQGFRFLRRRWGLSSLSHNHSSESDSENFNQESESRNTGPWLSSSLRNRCTPLFSRRRREGRDESSRIPTSDTSSRSHIFRRESNEVVHLEAQNDPLGAAANRPQASAASSSATTGGSTSDSAQGGRNTGIAGILPGSLFRFAVPPALGSNLTDNVMITVDIIPSGWNSADGKSDKTKSAPSRDPERLQKIKESLLLEDSEEEEGDLCRICQMAAASSSNLLIEPCKCTGSLQYVHQDCMKKWLQAKINSGSSLEAVTTCELCKEKLELNLEDFDIHELHRAHANEQAEYEFISSGLYLVVLLHLCEQSFSDMMGNTNEPSTRVRFINLARTLQAHMEDLETSEDDSEEDGDHNRTFDIAYFI.

Met1 is subject to N-acetylmethionine. Disordered regions lie at residues 1 to 126 (MESK…QVPR), 157 to 279 (LMDY…RRTT), 294 to 343 (FFSR…RASE), 361 to 425 (SHNH…HIFR), and 444 to 473 (AANRPQASAASSSATTGGSTSDSAQGGRNT). Residues 17-33 (SSSLSARMMSGSRGSSL) show a composition bias toward low complexity. Residues 37–48 (YHSRDSSFRLDS) show a composition bias toward basic and acidic residues. Residues 52–65 (STSASASASPFQSA) show a composition bias toward low complexity. 4 stretches are compositionally biased toward polar residues: residues 66–83 (WYSESEITQGARSRSQNQ), 95–126 (SCTNCTTSAGRNVGNGLNTLSDSSWRHSQVPR), 189–212 (NSMSTLQLNTSSTNHQLPSEHQTI), and 254–270 (ISNSERVVSSQRPFQES). The segment covering 294–303 (FFSRRSSQDS) has biased composition (low complexity). 3 stretches are compositionally biased toward polar residues: residues 304 to 336 (LNTRSLSSENSYVSPRILTASQSRSNVPSTSEV), 373 to 392 (FNQESESRNTGPWLSSSLRN), and 412 to 421 (IPTSDTSSRS). Ser317 and Ser389 each carry phosphoserine. The span at 444–470 (AANRPQASAASSSATTGGSTSDSAQGG) shows a compositional bias: low complexity. The segment at 544 to 614 (SEEEEGDLCR…ELCKEKLELN (71 aa)) adopts an RING-CH-type zinc-finger fold. Residues Cys552, Cys555, Cys570, Cys572, His580, Cys583, Cys604, and Cys607 each contribute to the Zn(2+) site. Position 686 is a phosphothreonine (Thr686). 2 positions are modified to phosphoserine: Ser687 and Ser691.

Its subcellular location is the cytoplasm. The enzyme catalyses S-ubiquitinyl-[E2 ubiquitin-conjugating enzyme]-L-cysteine + [acceptor protein]-L-lysine = [E2 ubiquitin-conjugating enzyme]-L-cysteine + N(6)-ubiquitinyl-[acceptor protein]-L-lysine.. The protein operates within protein modification; protein ubiquitination. E3 ubiquitin-protein ligase which may specifically enhance the E2 activity of HIP2. E3 ubiquitin ligases accept ubiquitin from an E2 ubiquitin-conjugating enzyme in the form of a thioester and then directly transfer the ubiquitin to targeted substrates. May be involved in T-cell proliferation by regulating LIF secretion. May play a role in lysosome homeostasis. Promotes 'Lys-6', 'Lys-11' and 'Lys-63'-linked mixed polyubiquitination on ATG14 leading to the inhibition of autophagy by impairing the interaction between ATG14 and STX7. Participates in the dopamine-mediated negative regulation of the NLRP3 inflammasome by promoting its uibiquitination and subsequent degradation. This is E3 ubiquitin-protein ligase MARCHF7 (MARCHF7) from Pongo abelii (Sumatran orangutan).